The primary structure comprises 167 residues: CGG triplet repeat-binding protein 1 (167 aa).

S56 is modified (phosphoserine). The segment at 65 to 86 (KTHTKRKAEFEEQNVRKKQRPL) is disordered. A Nuclear localization signal motif is present at residues 80–84 (RKKQR). S164 carries the post-translational modification Phosphoserine.

The protein resides in the nucleus. Binds to nonmethylated 5'-d(CGG)(n)-3' trinucleotide repeats in the FMR1 promoter. May play a role in regulating FMR1 promoter. This Mus musculus (Mouse) protein is CGG triplet repeat-binding protein 1 (Cggbp1).